Here is a 484-residue protein sequence, read N- to C-terminus: Sialidase-4 (484 aa).

The short motif at 22–25 (YRVP) is the FRIP motif element. Residues Arg-23 and Arg-43 each coordinate substrate. Residues Asp-47 and Asp-48 each act as proton acceptor in the active site. One copy of the BNR 1 repeat lies at 127–138 (VASRDAGLSWGS). The substrate site is built by Tyr-177 and Tyr-179. The stretch at 200 to 211 (FYSDDHGRTWRC) is one BNR 2 repeat. Residues Glu-222 and Arg-242 each coordinate substrate. The BNR 3 repeat unit spans residues 251-262 (ALSTDEGTSFLP). The interval 284-357 (PAPAPNRPRD…GPRPGVSGDV (74 aa)) is disordered. Residues 336–345 (RLQPRGDGPR) are compositionally biased toward low complexity. Residue Arg-389 participates in substrate binding. Catalysis depends on Tyr-419, which acts as the Nucleophile. The active site involves Glu-440.

This sequence belongs to the glycosyl hydrolase 33 family. In terms of processing, N-glycosylated. In terms of tissue distribution, predominant form in liver. Also expressed in brain, kidney and colon. As to expression, highly expressed in brain and at lower levels in kidney and liver.

It localises to the cell membrane. The protein resides in the endoplasmic reticulum membrane. Its subcellular location is the microsome membrane. The protein localises to the mitochondrion membrane. It is found in the cell projection. It localises to the neuron projection. The protein resides in the mitochondrion inner membrane. Its subcellular location is the mitochondrion outer membrane. The protein localises to the lysosome lumen. The enzyme catalyses Hydrolysis of alpha-(2-&gt;3)-, alpha-(2-&gt;6)-, alpha-(2-&gt;8)- glycosidic linkages of terminal sialic acid residues in oligosaccharides, glycoproteins, glycolipids, colominic acid and synthetic substrates.. The catalysed reaction is a ganglioside GM3 + H2O = a beta-D-galactosyl-(1-&gt;4)-beta-D-glucosyl-(1&lt;-&gt;1)-ceramide + N-acetylneuraminate. It carries out the reaction a ganglioside GM3 (d18:1(4E)) + H2O = a beta-D-Gal-(1-&gt;4)-beta-D-Glc-(1&lt;-&gt;1)-Cer(d18:1(4E)) + N-acetylneuraminate. It catalyses the reaction a ganglioside GM2 + H2O = a ganglioside GA2 + N-acetylneuraminate. The enzyme catalyses a ganglioside GM2 (d18:1(4E)) + H2O = a ganglioside GA2 (d18:1(4E)) + N-acetylneuraminate. The catalysed reaction is a ganglioside GD1a + H2O = a ganglioside GM1 + N-acetylneuraminate. It carries out the reaction a ganglioside GD1a (d18:1(4E)) + H2O = a ganglioside GM1 (d18:1(4E)) + N-acetylneuraminate. It catalyses the reaction a ganglioside GD3 + H2O = a ganglioside GM3 + N-acetylneuraminate. The enzyme catalyses a ganglioside GD3 (d18:1(4E)) + H2O = a ganglioside GM3 (d18:1(4E)) + N-acetylneuraminate. Functionally, exo-alpha-sialidase that catalyzes the hydrolytic cleavage of the terminal sialic acid (N-acetylneuraminic acid, Neu5Ac) of a glycan moiety in the catabolism of glycolipids, glycoproteins and oligosacharides. Efficiently hydrolyzes gangliosides including alpha-(2-&gt;3)-sialylated GD1a and GM3 and alpha-(2-&gt;8)-sialylated GD3. Hydrolyzes poly-alpha-(2-&gt;8)-sialylated neural cell adhesion molecule NCAM1 likely at growth cones, suppressing neurite outgrowth in hippocampal neurons. May desialylate sialyl Lewis A and X antigens at the cell surface, down-regulating these glycan epitopes recognized by SELE/E selectin in the initiation of cell adhesion and extravasation. Has sialidase activity toward mucin, fetuin and sialyllactose. This Homo sapiens (Human) protein is Sialidase-4 (NEU4).